The following is a 182-amino-acid chain: Large ribosomal subunit protein uL10 (182 aa).

It belongs to the universal ribosomal protein uL10 family. As to quaternary structure, part of the ribosomal stalk of the 50S ribosomal subunit. The N-terminus interacts with L11 and the large rRNA to form the base of the stalk. The C-terminus forms an elongated spine to which L12 dimers bind in a sequential fashion forming a multimeric L10(L12)X complex.

Functionally, forms part of the ribosomal stalk, playing a central role in the interaction of the ribosome with GTP-bound translation factors. The chain is Large ribosomal subunit protein uL10 from Janthinobacterium sp. (strain Marseille) (Minibacterium massiliensis).